Reading from the N-terminus, the 535-residue chain is Glutamate--cysteine ligase (535 aa).

It belongs to the glutamate--cysteine ligase type 1 family. Type 1 subfamily.

The catalysed reaction is L-cysteine + L-glutamate + ATP = gamma-L-glutamyl-L-cysteine + ADP + phosphate + H(+). The protein operates within sulfur metabolism; glutathione biosynthesis; glutathione from L-cysteine and L-glutamate: step 1/2. The sequence is that of Glutamate--cysteine ligase from Pseudomonas syringae pv. syringae (strain B728a).